A 391-amino-acid polypeptide reads, in one-letter code: Ectodysplasin-A (391 aa).

Residues 1–41 (MGYPEVERRELLPAAAPRERGSQGCGCGGAPARAGEGNSCL) lie on the Cytoplasmic side of the membrane. A helical; Signal-anchor for type II membrane protein transmembrane segment spans residues 42–62 (LFLGFFGLSLALHLLTLCCYL). At 63–391 (ELRSELRRER…AIRLGEAPAS (329 aa)) the chain is on the extracellular side. Disordered stretches follow at residues 73–127 (GAES…HSDS) and 146–245 (YSEE…GTRE). The span at 86-101 (TSGTLSSLGGLDPDSP) shows a compositional bias: low complexity. Over residues 102 to 113 (ITSHLGQPSPKQ) the composition is skewed to polar residues. Residues 180–229 (GPPGPNGPPGPPGPPGPQGPPGIPGIPGIPGTTVMGPPGPPGPPGPQGPP) enclose the Collagen-like domain. Composition is skewed to pro residues over residues 181–203 (PPGP…PGIP) and 216–228 (PPGP…PQGP). A THD domain is found at 249–385 (AVVHLQGQGS…HTTFFGAIRL (137 aa)). A glycan (N-linked (GlcNAc...) asparagine) is linked at asparagine 313. A disulfide bond links cysteine 332 and cysteine 346. A glycan (N-linked (GlcNAc...) asparagine) is linked at asparagine 372.

This sequence belongs to the tumor necrosis factor family. As to quaternary structure, homotrimer. The homotrimers may then dimerize and form higher-order oligomers. Post-translationally, N-glycosylated. In terms of processing, processing by furin produces a secreted form. Not abundant; expressed in specific cell types of ectodermal (but not mesodermal) origin of keratinocytes, hair follicles, sweat glands. Also in adult heart, liver, muscle, pancreas, prostate, fetal liver, uterus, small intestine and umbilical cord.

The protein localises to the cell membrane. It localises to the secreted. Its function is as follows. Cytokine which is involved in epithelial-mesenchymal signaling during morphogenesis of ectodermal organs. Functions as a ligand activating the DEATH-domain containing receptors EDAR and EDA2R. May also play a role in cell adhesion. In terms of biological role, binds only to the receptor EDAR, while isoform 3 binds exclusively to the receptor EDA2R. Functionally, binds only to the receptor EDA2R. The chain is Ectodysplasin-A (EDA) from Homo sapiens (Human).